The chain runs to 362 residues: Chalcone synthase A (362 aa).

Residue Cys168 is part of the active site.

It belongs to the thiolase-like superfamily. Chalcone/stilbene synthases family.

The catalysed reaction is (E)-4-coumaroyl-CoA + 3 malonyl-CoA + 3 H(+) = 2',4,4',6'-tetrahydroxychalcone + 3 CO2 + 4 CoA. The protein operates within secondary metabolite biosynthesis; flavonoid biosynthesis. In terms of biological role, the primary product of this enzyme is 4,2',4',6'-tetrahydroxychalcone (also termed naringenin-chalcone or chalcone) which can under specific conditions spontaneously isomerize into naringenin. This is Chalcone synthase A (CHSA) from Ipomoea trifida (Morning glory).